The following is a 266-amino-acid chain: CD82 antigen (266 aa).

At 1–11 (MGAGCVKVTKY) the chain is on the cytoplasmic side. A lipid anchor (S-palmitoyl cysteine) is attached at Cys-5. The chain crosses the membrane as a helical span at residues 12–32 (FLFLFNLLFFILGAVILGFGV). At 33–53 (WILADKSSFISVLQTSSSSLQ) the chain is on the extracellular side. The chain crosses the membrane as a helical span at residues 54–72 (VGAYVFIGVGAITMLMGFL). At 73-83 (GCIGAVNEVRC) the chain is on the cytoplasmic side. Cys-74 carries the S-palmitoyl cysteine lipid modification. The chain crosses the membrane as a helical span at residues 84-110 (LLGLYFVFLLLILIAQVTVEVLFYFNA). The Extracellular portion of the chain corresponds to 111–227 (NKLKQEMGNT…KAQAWLQENF (117 aa)). Residues Asn-127, Asn-131, Asn-157, Asn-166, and Asn-197 are each glycosylated (N-linked (GlcNAc...) asparagine). The chain crosses the membrane as a helical span at residues 228–249 (GILLGVCAGVAVIELLGLFLSI). At 250 to 266 (CLCRYIHSEDYSKVPKY) the chain is on the cytoplasmic side.

It belongs to the tetraspanin (TM4SF) family. Forms homooligomers. Interacts directly with IGSF8. Interacts with EGFR. Interacts with VEGFA and PDGFA. Interacts with ITGA4. Interacts with ITGA6; this interaction reduces ITGA6 cell surface expression. Interacts with ITGB1. Interacts with TLR4; this interaction inhibits TLR4-mediated signaling pathway. Interacts with TLR9. Interacts with PLAUR. In terms of processing, palmitoylated. Palmitoylation contributes to oligomerization and surface expression.

It localises to the cell membrane. In terms of biological role, structural component of specialized membrane microdomains known as tetraspanin-enriched microdomains (TERMs), which act as platforms for receptor clustering and signaling. Participates thereby in diverse biological functions such as cell signal transduction, adhesion, migration and protein trafficking. Acts as a attenuator of EGF signaling, facilitating ligand-induced endocytosis of the receptor and its subsequent desensitization. Mechanistically, modulates ligand-induced ubiquitination and trafficking of EGFR via E3 ligase CBL phosphorylation by PKC. Increases cell-matrix adhesion by regulating the membrane organization of integrin alpha4/ITA4. Modulates adhesion and suppresses cell migration through other integrins such as the alpha6/ITGA6 and beta1/ITGB1. Decreases cell-associated plasminogen activation by interfering with the interaction between urokinase-type plasminogen activator/PLAU and its receptor PLAUR. Associates with CD4 or CD8 and delivers costimulatory signals for the TCR/CD3 pathway. Plays a role in the restrains phagocyte migration but supports macrophage activation. Plays a role in TLR9 trafficking to acidified CpG-containing compartments by controlling interaction between TLR9 and VAMP3 and subsequent myddosome assembly. Inhibits LPS-induced inflammatory response by preventing binding of LPS to TLR4 on the cell surface. Plays a role in the activation of macrophages into anti-inflammatory phenotypes. Independently of Toll-like receptor (TLR) signaling, is recruited to pathogen-containing phagosomes prior to fusion with lysosomes and participates in antigen presentation. Also acts to control angiogenesis and switch angiogenic milieu to quiescent state by binding and sequestering VEGFA and PDGFA to inhibit the signaling they trigger via their respective cell surface receptor. The protein is CD82 antigen (Cd82) of Rattus norvegicus (Rat).